The primary structure comprises 761 residues: Zinc finger protein 711 (761 aa).

Glycyl lysine isopeptide (Lys-Gly) (interchain with G-Cter in SUMO2) cross-links involve residues K224, K235, and K296. C2H2-type zinc fingers lie at residues 383 to 408 (YPCH…HPDH), 414 to 436 (YQCT…LESH), 476 to 499 (HKCK…LAVH), 505 to 527 (HVCV…MRTH), and 533 to 556 (YQCQ…KSKH). The tract at residues 515–761 (RHPSELKKHM…IMRHHKEALM (247 aa)) is required for transcriptional activation. A C2H2-type 6; atypical zinc finger spans residues 562-584 (YKCEHCPQAFGDERELQRHLDLF). Residues C564, C567, and H580 each contribute to the Zn(2+) site. 6 consecutive C2H2-type zinc fingers follow at residues 590-613 (HQCP…ISVH), 619-641 (HKCE…SDIH), 647-670 (HQCR…LSVH), 676-698 (LKCK…MKTH), 704-727 (YQCE…ISIH), and 733-755 (HRCE…IMRH).

Belongs to the krueppel C2H2-type zinc-finger protein family. Interacts with PHF8. As to expression, expressed in neural tissues.

The protein resides in the nucleus. In terms of biological role, transcription regulator required for brain development. Probably acts as a transcription factor that binds to the promoter of target genes and recruits PHF8 histone demethylase, leading to activated expression of genes involved in neuron development, such as KDM5C. May compete with transcription factor ARX for activation of expression of KDM5C. This Homo sapiens (Human) protein is Zinc finger protein 711 (ZNF711).